The following is a 504-amino-acid chain: Glucose-6-phosphate isomerase (504 aa).

Glu-333 acts as the Proton donor in catalysis. Catalysis depends on residues His-364 and Lys-473.

This sequence belongs to the GPI family.

It localises to the cytoplasm. The enzyme catalyses alpha-D-glucose 6-phosphate = beta-D-fructose 6-phosphate. It participates in carbohydrate biosynthesis; gluconeogenesis. It functions in the pathway carbohydrate degradation; glycolysis; D-glyceraldehyde 3-phosphate and glycerone phosphate from D-glucose: step 2/4. Catalyzes the reversible isomerization of glucose-6-phosphate to fructose-6-phosphate. This chain is Glucose-6-phosphate isomerase, found in Stenotrophomonas maltophilia (strain K279a).